A 266-amino-acid polypeptide reads, in one-letter code: 4-hydroxy-tetrahydrodipicolinate reductase (266 aa).

NAD(+) is bound at residue 10-15 (GPRGRM). Lysine 38 contributes to the NADP(+) binding site. NAD(+) contacts are provided by residues 99-101 (GTT) and 125-128 (APNF). Histidine 155 acts as the Proton donor/acceptor in catalysis. Histidine 156 is a binding site for (S)-2,3,4,5-tetrahydrodipicolinate. Lysine 159 serves as the catalytic Proton donor. 165 to 166 (GT) contributes to the (S)-2,3,4,5-tetrahydrodipicolinate binding site.

Belongs to the DapB family.

The protein resides in the cytoplasm. It catalyses the reaction (S)-2,3,4,5-tetrahydrodipicolinate + NAD(+) + H2O = (2S,4S)-4-hydroxy-2,3,4,5-tetrahydrodipicolinate + NADH + H(+). It carries out the reaction (S)-2,3,4,5-tetrahydrodipicolinate + NADP(+) + H2O = (2S,4S)-4-hydroxy-2,3,4,5-tetrahydrodipicolinate + NADPH + H(+). It participates in amino-acid biosynthesis; L-lysine biosynthesis via DAP pathway; (S)-tetrahydrodipicolinate from L-aspartate: step 4/4. Its function is as follows. Catalyzes the conversion of 4-hydroxy-tetrahydrodipicolinate (HTPA) to tetrahydrodipicolinate. The chain is 4-hydroxy-tetrahydrodipicolinate reductase from Bacillus cereus (strain B4264).